The chain runs to 555 residues: Probable terpene synthase 6 (555 aa).

Mg(2+) is bound by residues Asp-309, Asp-313, and Glu-460. The DDXXD motif motif lies at Asp-309 to Asp-313.

It belongs to the terpene synthase family. Mg(2+) is required as a cofactor.

Probable sesquiterpene synthase. The protein is Probable terpene synthase 6 (TPS6) of Ricinus communis (Castor bean).